The sequence spans 437 residues: Enolase-related protein 1 (437 aa).

Residues His-160 and Glu-169 each contribute to the substrate site. Catalysis depends on Glu-212, which acts as the Proton donor. Asp-247, Glu-296, and Asp-321 together coordinate Mg(2+). Positions 296 and 321 each coordinate substrate. The active-site Proton acceptor is the Lys-346. Substrate contacts are provided by residues 373 to 376 (SHRS) and Lys-397.

This sequence belongs to the enolase family. Mg(2+) serves as cofactor.

The catalysed reaction is (2R)-2-phosphoglycerate = phosphoenolpyruvate + H2O. The protein operates within carbohydrate degradation; glycolysis; pyruvate from D-glyceraldehyde 3-phosphate: step 4/5. The chain is Enolase-related protein 1 (ERR1) from Saccharomyces cerevisiae (strain ATCC 204508 / S288c) (Baker's yeast).